The sequence spans 218 residues: Thiopurine S-methyltransferase (218 aa).

4 residues coordinate S-adenosyl-L-methionine: W11, L46, E67, and R122.

This sequence belongs to the class I-like SAM-binding methyltransferase superfamily. TPMT family.

The protein localises to the cytoplasm. It catalyses the reaction S-adenosyl-L-methionine + a thiopurine = S-adenosyl-L-homocysteine + a thiopurine S-methylether.. This is Thiopurine S-methyltransferase from Vibrio cholerae serotype O1 (strain ATCC 39315 / El Tor Inaba N16961).